A 305-amino-acid polypeptide reads, in one-letter code: Protoheme IX farnesyltransferase (305 aa).

9 helical membrane-spanning segments follow: residues 31 to 51, 52 to 72, 96 to 118, 123 to 145, 151 to 171, 179 to 199, 225 to 245, 247 to 267, and 281 to 301; these read VISLVIFTGFVGMWLAPYSVH, PFIAGIAVVCIALGAGSAGAI, VIESDEALSFGLITGFFAVFFMA, LLASFLLLFTIFYYICIYTIWLK, NIVIGGVSGALPPVIGYAAVS, IILFLIIFIWTPPHSWALALF, ILIYSILLFIVSLMPFFIGMN, FIYLIIAGILGVVFLYYAGSL, and FAYSIFYLFFIFLLLYSTNTI.

It belongs to the UbiA prenyltransferase family. Protoheme IX farnesyltransferase subfamily.

The protein resides in the cell inner membrane. It catalyses the reaction heme b + (2E,6E)-farnesyl diphosphate + H2O = Fe(II)-heme o + diphosphate. It participates in porphyrin-containing compound metabolism; heme O biosynthesis; heme O from protoheme: step 1/1. Its function is as follows. Converts heme B (protoheme IX) to heme O by substitution of the vinyl group on carbon 2 of heme B porphyrin ring with a hydroxyethyl farnesyl side group. The protein is Protoheme IX farnesyltransferase of Rickettsia massiliae (strain Mtu5).